A 103-amino-acid chain; its full sequence is Gene 56 protein (103 aa).

The Glutaredoxin domain occupies Trp9 to Leu103.

This Mycobacterium phage L5 (Mycobacteriophage L5) protein is Gene 56 protein (56).